The chain runs to 244 residues: Ubiquitin carboxyl-terminal hydrolase mug105 (244 aa).

Residue cysteine 42 is the Nucleophile of the active site. The active-site Proton acceptor is histidine 165. The active site involves aspartate 183.

It belongs to the peptidase C78 family. ZUFSP subfamily.

It is found in the cytoplasm. It catalyses the reaction Thiol-dependent hydrolysis of ester, thioester, amide, peptide and isopeptide bonds formed by the C-terminal Gly of ubiquitin (a 76-residue protein attached to proteins as an intracellular targeting signal).. Deubiquitinase with endodeubiquitinase activity that preferentially cleaves 'Lys-48'-linked polyubiquitin chains. Shows only weak activity against 'Lys-63' and 'Lys-11'-linked chains. Has a role in meiosis. In Schizosaccharomyces pombe (strain 972 / ATCC 24843) (Fission yeast), this protein is Ubiquitin carboxyl-terminal hydrolase mug105 (mug105).